The following is a 179-amino-acid chain: Adenine phosphoribosyltransferase (179 aa).

This sequence belongs to the purine/pyrimidine phosphoribosyltransferase family. As to quaternary structure, homodimer.

The protein localises to the cytoplasm. It carries out the reaction AMP + diphosphate = 5-phospho-alpha-D-ribose 1-diphosphate + adenine. It participates in purine metabolism; AMP biosynthesis via salvage pathway; AMP from adenine: step 1/1. Catalyzes a salvage reaction resulting in the formation of AMP, that is energically less costly than de novo synthesis. In Ruegeria pomeroyi (strain ATCC 700808 / DSM 15171 / DSS-3) (Silicibacter pomeroyi), this protein is Adenine phosphoribosyltransferase.